The chain runs to 344 residues: AP2/ERF and B3 domain-containing transcription factor RAV1 (344 aa).

Residues M1 to S15 show a composition bias toward low complexity. Residues M1–I22 are disordered. The AP2/ERF DNA-binding region spans K61–K116. Positions E148–S169 are disordered. A DNA-binding region (TF-B3) is located at residues F188–S292.

Belongs to the AP2/ERF transcription factor family. RAV subfamily. In terms of assembly, monomer. As to expression, expressed in all tissues examined: Roots, rosette leaves, cauline leaves, inflorescence stems, flowers and siliques. Highest expression in roots and rosette leaves. Very low expression in flowers.

It is found in the nucleus. Functionally, binds specifically to bipartite recognition sequences composed of two unrelated motifs, 5'-CAACA-3' and 5'-CACCTG-3'. May function as negative regulator of plant growth and development. In Arabidopsis thaliana (Mouse-ear cress), this protein is AP2/ERF and B3 domain-containing transcription factor RAV1 (RAV1).